A 257-amino-acid polypeptide reads, in one-letter code: Global transcriptional regulator CodY (257 aa).

Positions 1–155 are GAF domain; sequence MSLLSKTREL…AATVIGMEIL (155 aa). The segment at residues 203–222 is a DNA-binding region (H-T-H motif); the sequence is ASKVADGVGITRSVIVNALR.

Belongs to the CodY family.

Its subcellular location is the cytoplasm. Its function is as follows. DNA-binding global transcriptional regulator which is involved in the adaptive response to starvation and acts by directly or indirectly controlling the expression of numerous genes in response to nutrient availability. During rapid exponential growth, CodY is highly active and represses genes whose products allow adaptation to nutrient depletion. The chain is Global transcriptional regulator CodY from Staphylococcus aureus (strain bovine RF122 / ET3-1).